The chain runs to 185 residues: Acireductone dioxygenase (185 aa).

Positions 97, 99, 103, and 141 each coordinate Fe(2+). 4 residues coordinate Ni(2+): His97, His99, Glu103, and His141.

The protein belongs to the acireductone dioxygenase (ARD) family. Monomer. The cofactor is Fe(2+). Ni(2+) is required as a cofactor.

It carries out the reaction 1,2-dihydroxy-5-(methylsulfanyl)pent-1-en-3-one + O2 = 3-(methylsulfanyl)propanoate + CO + formate + 2 H(+). The catalysed reaction is 1,2-dihydroxy-5-(methylsulfanyl)pent-1-en-3-one + O2 = 4-methylsulfanyl-2-oxobutanoate + formate + 2 H(+). Its pathway is amino-acid biosynthesis; L-methionine biosynthesis via salvage pathway; L-methionine from S-methyl-5-thio-alpha-D-ribose 1-phosphate: step 5/6. Functionally, catalyzes 2 different reactions between oxygen and the acireductone 1,2-dihydroxy-3-keto-5-methylthiopentene (DHK-MTPene) depending upon the metal bound in the active site. Fe-containing acireductone dioxygenase (Fe-ARD) produces formate and 2-keto-4-methylthiobutyrate (KMTB), the alpha-ketoacid precursor of methionine in the methionine recycle pathway. Ni-containing acireductone dioxygenase (Ni-ARD) produces methylthiopropionate, carbon monoxide and formate, and does not lie on the methionine recycle pathway. In Stenotrophomonas maltophilia (strain R551-3), this protein is Acireductone dioxygenase.